Consider the following 132-residue polypeptide: Large ribosomal subunit protein bL19 (132 aa).

The protein belongs to the bacterial ribosomal protein bL19 family.

In terms of biological role, this protein is located at the 30S-50S ribosomal subunit interface and may play a role in the structure and function of the aminoacyl-tRNA binding site. The protein is Large ribosomal subunit protein bL19 of Methylobacterium radiotolerans (strain ATCC 27329 / DSM 1819 / JCM 2831 / NBRC 15690 / NCIMB 10815 / 0-1).